Consider the following 389-residue polypeptide: Phospho-N-acetylmuramoyl-pentapeptide-transferase (389 aa).

The next 10 helical transmembrane spans lie at 21 to 41, 70 to 90, 97 to 117, 134 to 154, 189 to 209, 222 to 242, 259 to 279, 286 to 306, 311 to 331, and 366 to 386; these read FITF…LVTG, GTPT…TLLW, FIWV…VDDY, YMWQ…SVSA, TISY…VIVG, GLAI…AYLT, AGEL…FLWF, VFMG…IAVI, VVLF…MLQV, and QVVV…LSTL.

This sequence belongs to the glycosyltransferase 4 family. MraY subfamily. It depends on Mg(2+) as a cofactor.

Its subcellular location is the cell inner membrane. The enzyme catalyses UDP-N-acetyl-alpha-D-muramoyl-L-alanyl-gamma-D-glutamyl-meso-2,6-diaminopimeloyl-D-alanyl-D-alanine + di-trans,octa-cis-undecaprenyl phosphate = di-trans,octa-cis-undecaprenyl diphospho-N-acetyl-alpha-D-muramoyl-L-alanyl-D-glutamyl-meso-2,6-diaminopimeloyl-D-alanyl-D-alanine + UMP. It functions in the pathway cell wall biogenesis; peptidoglycan biosynthesis. Catalyzes the initial step of the lipid cycle reactions in the biosynthesis of the cell wall peptidoglycan: transfers peptidoglycan precursor phospho-MurNAc-pentapeptide from UDP-MurNAc-pentapeptide onto the lipid carrier undecaprenyl phosphate, yielding undecaprenyl-pyrophosphoryl-MurNAc-pentapeptide, known as lipid I. The chain is Phospho-N-acetylmuramoyl-pentapeptide-transferase from Janthinobacterium sp. (strain Marseille) (Minibacterium massiliensis).